A 278-amino-acid chain; its full sequence is Toxin coregulated pilus biosynthesis protein D (278 aa).

Residues L30–Y50 form a helical membrane-spanning segment.

The protein localises to the cell membrane. Functionally, involved in TCP pilus biogenesis. In Vibrio cholerae serotype O1 (strain ATCC 39315 / El Tor Inaba N16961), this protein is Toxin coregulated pilus biosynthesis protein D (tcpD).